We begin with the raw amino-acid sequence, 836 residues long: Taste receptor type 1 member 2 (836 aa).

The signal sequence occupies residues Met1–Ala19. Over Glu20–Thr565 the chain is Extracellular. 9 N-linked (GlcNAc...) asparagine glycosylation sites follow: Asn84, Asn292, Asn312, Asn351, Asn427, Asn479, Asn486, Asn526, and Asn546. Residues Ile566–Phe586 traverse the membrane as a helical segment. Residues Trp587–Pro601 lie on the Cytoplasmic side of the membrane. A helical membrane pass occupies residues Met602–Gly622. Topologically, residues Gln623–Thr634 are extracellular. A helical membrane pass occupies residues Phe635–Val655. Over Cys656 to Phe680 the chain is Cytoplasmic. Residues Val681–Ala701 traverse the membrane as a helical segment. Residues Asn702–Ala724 lie on the Extracellular side of the membrane. The chain crosses the membrane as a helical span at residues Leu725–Met745. Residues Gly746–Lys757 are Cytoplasmic-facing. A helical transmembrane segment spans residues Phe758–Ser778. Over Val779–Asp781 the chain is Extracellular. The chain crosses the membrane as a helical span at residues Gly782–Phe802. At Gly803–Asp836 the chain is on the cytoplasmic side.

This sequence belongs to the G-protein coupled receptor 3 family. TAS1R subfamily. In terms of assembly, forms heterodimers with TAS1R3.

The protein localises to the cell membrane. Its function is as follows. Putative taste receptor. TAS1R2/TAS1R3 recognizes diverse natural and synthetic sweeteners. The polypeptide is Taste receptor type 1 member 2 (TAS1R2) (Canis lupus familiaris (Dog)).